The primary structure comprises 338 residues: Phosphate acyltransferase (338 aa).

The protein belongs to the PlsX family. As to quaternary structure, homodimer. Probably interacts with PlsY.

It is found in the cytoplasm. The enzyme catalyses a fatty acyl-[ACP] + phosphate = an acyl phosphate + holo-[ACP]. It functions in the pathway lipid metabolism; phospholipid metabolism. Its function is as follows. Catalyzes the reversible formation of acyl-phosphate (acyl-PO(4)) from acyl-[acyl-carrier-protein] (acyl-ACP). This enzyme utilizes acyl-ACP as fatty acyl donor, but not acyl-CoA. In Mannheimia succiniciproducens (strain KCTC 0769BP / MBEL55E), this protein is Phosphate acyltransferase.